The sequence spans 369 residues: 2-aminoethylphosphonate--pyruvate transaminase (369 aa).

Lysine 193 carries the N6-(pyridoxal phosphate)lysine modification.

The protein belongs to the class-V pyridoxal-phosphate-dependent aminotransferase family. PhnW subfamily. Homodimer. Pyridoxal 5'-phosphate serves as cofactor.

The catalysed reaction is (2-aminoethyl)phosphonate + pyruvate = phosphonoacetaldehyde + L-alanine. In terms of biological role, involved in phosphonate degradation. This Burkholderia thailandensis (strain ATCC 700388 / DSM 13276 / CCUG 48851 / CIP 106301 / E264) protein is 2-aminoethylphosphonate--pyruvate transaminase.